Here is a 110-residue protein sequence, read N- to C-terminus: Nucleoid-associated protein RALTA_A1934 (110 aa).

Residues 88–98 (TTQEKMGSMTS) are compositionally biased toward polar residues. The tract at residues 88 to 110 (TTQEKMGSMTSGLPLPPGFKLPF) is disordered. The segment covering 101–110 (PLPPGFKLPF) has biased composition (pro residues).

The protein belongs to the YbaB/EbfC family. As to quaternary structure, homodimer.

Its subcellular location is the cytoplasm. The protein resides in the nucleoid. Its function is as follows. Binds to DNA and alters its conformation. May be involved in regulation of gene expression, nucleoid organization and DNA protection. The protein is Nucleoid-associated protein RALTA_A1934 of Cupriavidus taiwanensis (strain DSM 17343 / BCRC 17206 / CCUG 44338 / CIP 107171 / LMG 19424 / R1) (Ralstonia taiwanensis (strain LMG 19424)).